Reading from the N-terminus, the 298-residue chain is N-acetylmuramic acid 6-phosphate etherase (298 aa).

In terms of domain architecture, SIS spans 55-218 (IHAQVSGGGR…STGLMIKSGK (164 aa)). Glutamate 83 serves as the catalytic Proton donor. Residue glutamate 114 is part of the active site.

The protein belongs to the GCKR-like family. MurNAc-6-P etherase subfamily. As to quaternary structure, homodimer.

The catalysed reaction is N-acetyl-D-muramate 6-phosphate + H2O = N-acetyl-D-glucosamine 6-phosphate + (R)-lactate. It functions in the pathway amino-sugar metabolism; 1,6-anhydro-N-acetylmuramate degradation. The protein operates within amino-sugar metabolism; N-acetylmuramate degradation. Its pathway is cell wall biogenesis; peptidoglycan recycling. Functionally, specifically catalyzes the cleavage of the D-lactyl ether substituent of MurNAc 6-phosphate, producing GlcNAc 6-phosphate and D-lactate. Together with AnmK, is also required for the utilization of anhydro-N-acetylmuramic acid (anhMurNAc) either imported from the medium or derived from its own cell wall murein, and thus plays a role in cell wall recycling. This is N-acetylmuramic acid 6-phosphate etherase from Escherichia coli O7:K1 (strain IAI39 / ExPEC).